Here is a 93-residue protein sequence, read N- to C-terminus: Molybdopterin synthase sulfur carrier subunit (93 aa).

Position 93 is a 1-thioglycine; alternate (Gly-93). A Glycyl adenylate; alternate modification is found at Gly-93.

It belongs to the MoaD family. MOCS2A subfamily. In terms of assembly, heterotetramer; composed of 2 small (MOCS2A) and 2 large (MOCS2B) subunits. Post-translationally, C-terminal thiocarboxylation occurs in 2 steps, it is first acyl-adenylated (-COAMP) via the hesA/moeB/thiF part of UBA4, then thiocarboxylated (-COSH) via the rhodanese domain of UBA4.

Its subcellular location is the cytoplasm. It participates in cofactor biosynthesis; molybdopterin biosynthesis. Its function is as follows. Acts as a sulfur carrier required for molybdopterin biosynthesis. Component of the molybdopterin synthase complex that catalyzes the conversion of precursor Z into molybdopterin by mediating the incorporation of 2 sulfur atoms into precursor Z to generate a dithiolene group. In the complex, serves as sulfur donor by being thiocarboxylated (-COSH) at its C-terminus by UBA4. After interaction with MOCS2B, the sulfur is then transferred to precursor Z to form molybdopterin. The sequence is that of Molybdopterin synthase sulfur carrier subunit from Mycosarcoma maydis (Corn smut fungus).